Here is a 681-residue protein sequence, read N- to C-terminus: Envelope glycoprotein (681 aa).

Residues 1–18 (MKTTCLLISLILIQGVKT) form the signal peptide. Residues 19 to 648 (LPILEIASNI…GLGGKWWTSD (630 aa)) lie on the Extracellular side of the membrane. The segment at 38-188 (SGTLQKTEDV…FSRQGQGYRH (151 aa)) is receptor-binding. N-linked (GlcNAc...) asparagine; by host glycans are attached at residues N94, N171, N190, N202, N207, N219, N223, and N255. A disordered region spans residues 222–424 (KNQTCAPSKK…TSPSPTPNST (203 aa)). 3 stretches are compositionally biased toward polar residues: residues 244–259 (LTSTSTDATKLNTTDP), 278–290 (PYTTSDAATKQGL), and 308–331 (GGNNTNHSQGVVTEPGKTNTTAQP). The tract at residues 277–455 (EPYTTSDAAT…PFLDGLINAP (179 aa)) is mucin-like region. Residues N310, N313, N326, N337, N344, N345, N350, N360, N397, N408, N422, and N487 are each glycosylated (N-linked (GlcNAc...) asparagine; by host). The segment covering 337–347 (NTTTISTNNTS) has biased composition (low complexity). Positions 348 to 388 (KHNLSTPSVPIQNATNYNTQSTAPENEQTSAPSKTTLLPTE) are enriched in polar residues. Low complexity predominate over residues 389 to 424 (NPTTAKSTNSTKSPTTTVPNTTNKYSTSPSPTPNST). A fusion peptide region spans residues 529–549 (GLSWIPFFGPGIEGLYTAGLI). Residues N564 and N619 are each glycosylated (N-linked (GlcNAc...) asparagine; by host). The chain crosses the membrane as a helical span at residues 649-669 (WGVLTNLGILLLLSIAVLIAL). Residues 670 to 681 (SCICRIFTKYIG) lie on the Cytoplasmic side of the membrane. S-palmitoyl cysteine; by host attachment occurs at residues C671 and C673.

It belongs to the filoviruses glycoprotein family. As to quaternary structure, homotrimer; each monomer consists of a GP1 and a GP2 subunit linked by disulfide bonds. The resulting peplomers (GP1,2) protrude from the virus surface as spikes. GP1,2 interacts with human CD209 and CLEC4M (collectively referred to as DC-SIGN(R)). Asialoglycoprotein receptor (ASGP-R) may be a liver-specific receptor for GP1,2. Members of the Tyro3 receptor tyrosine kinase family may be cell entry factors interacting with GP1,2. In terms of processing, N-glycosylated. O-glycosylated in the mucin-like region. Post-translationally, specific enzymatic cleavages in vivo yield mature proteins. The precursor is processed into GP1 and GP2 by host cell furin in the trans Golgi, and maybe by other host proteases, to yield the mature GP1 and GP2 proteins. The cleavage site corresponds to the furin optimal cleavage sequence [KR]-X-[KR]-R. In terms of processing, GP1 is phosphorylated on serine residues between residues 260 and 273.

It localises to the virion membrane. The protein localises to the host cell membrane. GP1 is responsible for binding to the receptor(s) on target cells. Interacts with CD209/DC-SIGN and CLEC4M/DC-SIGNR which act as cofactors for virus entry into the host cell. Binding to CD209 and CLEC4M, which are respectively found on dendritic cells (DCs), and on endothelial cells of liver sinusoids and lymph node sinuses, facilitate infection of macrophages and endothelial cells. These interactions not only facilitate virus cell entry, but also allow capture of viral particles by DCs and subsequent transmission to susceptible cells without DCs infection (trans infection). Its function is as follows. GP2 acts as a class I viral fusion protein. Under the current model, the protein has at least 3 conformational states: pre-fusion native state, pre-hairpin intermediate state, and post-fusion hairpin state. During viral and target cell membrane fusion, the coiled coil regions (heptad repeats) assume a trimer-of-hairpins structure, positioning the fusion peptide in close proximity to the C-terminal region of the ectodomain. The formation of this structure appears to drive apposition and subsequent fusion of viral and target cell membranes. Responsible for penetration of the virus into the cell cytoplasm by mediating the fusion of the membrane of the endocytosed virus particle with the endosomal membrane. Low pH in endosomes induces an irreversible conformational change in GP2, releasing the fusion hydrophobic peptide. The polypeptide is Envelope glycoprotein (GP) (Chlorocebus aethiops (Green monkey)).